A 189-amino-acid polypeptide reads, in one-letter code: Translation machinery-associated protein 22 (189 aa).

The 72-residue stretch at valine 94–leucine 165 folds into the SUI1 domain.

Belongs to the DENR family. Interacts with the 40S ribosomal subunit.

It is found in the cytoplasm. The protein is Translation machinery-associated protein 22 (TMA22) of Debaryomyces hansenii (strain ATCC 36239 / CBS 767 / BCRC 21394 / JCM 1990 / NBRC 0083 / IGC 2968) (Yeast).